Here is a 193-residue protein sequence, read N- to C-terminus: Ion-translocating oxidoreductase complex subunit A (193 aa).

A run of 6 helical transmembrane segments spans residues 5 to 25 (ALLFVSILLVNNFVLVKFLGL), 39 to 59 (IGMGMATTFVMTVGSMFSWLV), 62 to 82 (FILVPLDILYLRTMAFILVLA), 102 to 122 (LLGIFLPLITTNCAVLGVVLL), 134 to 154 (TIYGFGGAAGFSLVMVLFAAI), and 171 to 191 (SIALITAGLMSLAFMGFTGLV).

Belongs to the NqrDE/RnfAE family. In terms of assembly, the complex is composed of six subunits: RnfA, RnfB, RnfC, RnfD, RnfE and RnfG.

The protein resides in the cell inner membrane. Part of a membrane-bound complex that couples electron transfer with translocation of ions across the membrane. This is Ion-translocating oxidoreductase complex subunit A from Pectobacterium carotovorum subsp. carotovorum (strain PC1).